A 663-amino-acid chain; its full sequence is Glutamate-rich protein 6 (663 aa).

Disordered regions lie at residues 1–74 and 106–136; these read MAHL…ETFS and LTST…HKSF. The span at 20 to 69 shows a compositional bias: acidic residues; sequence ESEEELEEEEEEEEVEEEEEEVEEEEEEVEEEEEEVVEEELVGEEQELEA. Low complexity predominate over residues 112–132; that stretch reads PSQSATSTETPSASPPSSTSS.

This sequence belongs to the ERICH6 family.

It is found in the nucleus. The protein is Glutamate-rich protein 6 (ERICH6) of Homo sapiens (Human).